A 715-amino-acid chain; its full sequence is NADH-ubiquinone oxidoreductase chain 5 (715 aa).

Transmembrane regions (helical) follow at residues 1 to 21 (MYLS…FFGR), 30 to 50 (LITC…FFEV), 81 to 101 (LTVA…IYSI), 119 to 139 (LFTF…MFVG), 140 to 160 (WEGV…RIAA), 177 to 197 (FLTI…YATV), 200 to 220 (LAPY…LIGA), 241 to 261 (TPVS…YLLM), 274 to 294 (LLLC…IGLF), 310 to 330 (LGMM…FHLI), 331 to 351 (NHAF…HAVA), 366 to 386 (LPLT…FPYM), 403 to 423 (FSFS…FTTL), 487 to 507 (GFFL…FGFI), 543 to 563 (TLFK…ALVL), 647 to 667 (IVTN…FTFI), and 668 to 688 (SLLE…LSLT).

This sequence belongs to the complex I subunit 5 family.

The protein localises to the mitochondrion inner membrane. The enzyme catalyses a ubiquinone + NADH + 5 H(+)(in) = a ubiquinol + NAD(+) + 4 H(+)(out). In terms of biological role, core subunit of the mitochondrial membrane respiratory chain NADH dehydrogenase (Complex I) that is believed to belong to the minimal assembly required for catalysis. Complex I functions in the transfer of electrons from NADH to the respiratory chain. The immediate electron acceptor for the enzyme is believed to be ubiquinone. The polypeptide is NADH-ubiquinone oxidoreductase chain 5 (ndh-5) (Neurospora crassa (strain ATCC 24698 / 74-OR23-1A / CBS 708.71 / DSM 1257 / FGSC 987)).